Reading from the N-terminus, the 457-residue chain is Phosphomethylpyrimidine synthase (457 aa).

Residues Asn88, Met117, Tyr146, His182, 204–206, 245–248, and Glu284 each bind substrate; these read SRG and DACR. Position 288 (His288) interacts with Zn(2+). Tyr311 is a substrate binding site. Residue His352 participates in Zn(2+) binding. The [4Fe-4S] cluster site is built by Cys428, Cys431, and Cys435.

It belongs to the ThiC family. It depends on [4Fe-4S] cluster as a cofactor.

It catalyses the reaction 5-amino-1-(5-phospho-beta-D-ribosyl)imidazole + S-adenosyl-L-methionine = 4-amino-2-methyl-5-(phosphooxymethyl)pyrimidine + CO + 5'-deoxyadenosine + formate + L-methionine + 3 H(+). The protein operates within cofactor biosynthesis; thiamine diphosphate biosynthesis. Catalyzes the synthesis of the hydroxymethylpyrimidine phosphate (HMP-P) moiety of thiamine from aminoimidazole ribotide (AIR) in a radical S-adenosyl-L-methionine (SAM)-dependent reaction. In Clostridium tetani (strain Massachusetts / E88), this protein is Phosphomethylpyrimidine synthase.